Consider the following 237-residue polypeptide: uncharacterized protein (237 aa).

Positions Met-1–Gly-25 form a signal peptide, tat-type signal. The segment at Ile-201–Pro-237 is disordered.

Post-translationally, exported by the Tat system. The position of the signal peptide cleavage has not been experimentally proven. Can also be exported by the Sec system.

This is an uncharacterized protein from Escherichia coli (strain K12).